The sequence spans 342 residues: tRNA N6-adenosine threonylcarbamoyltransferase (342 aa).

Residues histidine 114 and histidine 118 each contribute to the Fe cation site. Substrate contacts are provided by residues 136–140 (LVSGG), aspartate 169, glycine 182, aspartate 186, and asparagine 275. Aspartate 301 is a Fe cation binding site.

Belongs to the KAE1 / TsaD family. Requires Fe(2+) as cofactor.

It localises to the cytoplasm. The enzyme catalyses L-threonylcarbamoyladenylate + adenosine(37) in tRNA = N(6)-L-threonylcarbamoyladenosine(37) in tRNA + AMP + H(+). Required for the formation of a threonylcarbamoyl group on adenosine at position 37 (t(6)A37) in tRNAs that read codons beginning with adenine. Is involved in the transfer of the threonylcarbamoyl moiety of threonylcarbamoyl-AMP (TC-AMP) to the N6 group of A37, together with TsaE and TsaB. TsaD likely plays a direct catalytic role in this reaction. This is tRNA N6-adenosine threonylcarbamoyltransferase from Streptococcus pyogenes serotype M18 (strain MGAS8232).